The primary structure comprises 123 residues: Large ribosomal subunit protein bL12 (123 aa).

The segment at 98–123 (KEGVSKEEAEEIKSKLEDAGATVELK) is disordered. Over residues 100–115 (GVSKEEAEEIKSKLED) the composition is skewed to basic and acidic residues.

The protein belongs to the bacterial ribosomal protein bL12 family. As to quaternary structure, homodimer. Part of the ribosomal stalk of the 50S ribosomal subunit. Forms a multimeric L10(L12)X complex, where L10 forms an elongated spine to which 2 to 4 L12 dimers bind in a sequential fashion. Binds GTP-bound translation factors.

Functionally, forms part of the ribosomal stalk which helps the ribosome interact with GTP-bound translation factors. Is thus essential for accurate translation. This Halothermothrix orenii (strain H 168 / OCM 544 / DSM 9562) protein is Large ribosomal subunit protein bL12.